The following is a 222-amino-acid chain: Putative N-acetylmannosamine-6-phosphate 2-epimerase (222 aa).

It belongs to the NanE family.

It carries out the reaction an N-acyl-D-glucosamine 6-phosphate = an N-acyl-D-mannosamine 6-phosphate. Its pathway is amino-sugar metabolism; N-acetylneuraminate degradation; D-fructose 6-phosphate from N-acetylneuraminate: step 3/5. Its function is as follows. Converts N-acetylmannosamine-6-phosphate (ManNAc-6-P) to N-acetylglucosamine-6-phosphate (GlcNAc-6-P). In Staphylococcus aureus (strain Mu3 / ATCC 700698), this protein is Putative N-acetylmannosamine-6-phosphate 2-epimerase.